The chain runs to 47 residues: Large ribosomal subunit protein bL33 (47 aa).

Belongs to the bacterial ribosomal protein bL33 family.

This is Large ribosomal subunit protein bL33 from Staphylococcus capitis.